Here is a 71-residue protein sequence, read N- to C-terminus: uncharacterized protein (71 aa).

This is an uncharacterized protein from Vaccinia virus (strain Copenhagen) (VACV).